Reading from the N-terminus, the 452-residue chain is Tubulin alpha-2/alpha-4 chain (452 aa).

Gln11 serves as a coordination point for GTP. Lys40 carries the post-translational modification N6-acetyllysine. Glu71, Ser140, Gly144, Thr145, Thr179, Asn206, and Asn228 together coordinate GTP. Glu71 is a Mg(2+) binding site. Glu254 is an active-site residue. A disordered region spans residues 432–452 (YEEVGVDSVEGEGEEEGGEEY).

Belongs to the tubulin family. As to quaternary structure, dimer of alpha and beta chains. A typical microtubule is a hollow water-filled tube with an outer diameter of 25 nm and an inner diameter of 15 nM. Alpha-beta heterodimers associate head-to-tail to form protofilaments running lengthwise along the microtubule wall with the beta-tubulin subunit facing the microtubule plus end conferring a structural polarity. Microtubules usually have 13 protofilaments but different protofilament numbers can be found in some organisms and specialized cells. Requires Mg(2+) as cofactor. Post-translationally, undergoes a tyrosination/detyrosination cycle, the cyclic removal and re-addition of a C-terminal tyrosine residue by the enzymes tubulin tyrosine carboxypeptidase (TTCP) and tubulin tyrosine ligase (TTL), respectively. In terms of processing, acetylation of alpha chains at Lys-40 stabilizes microtubules and affects affinity and processivity of microtubule motors. This modification has a role in multiple cellular functions, ranging from cell motility, cell cycle progression or cell differentiation to intracellular trafficking and signaling.

It is found in the cytoplasm. Its subcellular location is the cytoskeleton. The catalysed reaction is GTP + H2O = GDP + phosphate + H(+). Functionally, tubulin is the major constituent of microtubules, a cylinder consisting of laterally associated linear protofilaments composed of alpha- and beta-tubulin heterodimers. Microtubules grow by the addition of GTP-tubulin dimers to the microtubule end, where a stabilizing cap forms. Below the cap, tubulin dimers are in GDP-bound state, owing to GTPase activity of alpha-tubulin. The chain is Tubulin alpha-2/alpha-4 chain (TUB2) from Patella vulgata (Common limpet).